The following is a 397-amino-acid chain: 1-deoxy-D-xylulose 5-phosphate reductoisomerase (397 aa).

7 residues coordinate NADPH: serine 10, glycine 11, serine 12, isoleucine 13, alanine 36, arginine 37, and asparagine 124. Residue lysine 125 participates in 1-deoxy-D-xylulose 5-phosphate binding. NADPH is bound at residue glutamate 126. Position 150 (aspartate 150) interacts with Mn(2+). Residues serine 151, glutamate 152, serine 186, and histidine 209 each contribute to the 1-deoxy-D-xylulose 5-phosphate site. Residue glutamate 152 participates in Mn(2+) binding. NADPH is bound at residue glycine 215. Serine 222, asparagine 227, lysine 228, and glutamate 231 together coordinate 1-deoxy-D-xylulose 5-phosphate. Position 231 (glutamate 231) interacts with Mn(2+).

It belongs to the DXR family. It depends on Mg(2+) as a cofactor. Requires Mn(2+) as cofactor.

It carries out the reaction 2-C-methyl-D-erythritol 4-phosphate + NADP(+) = 1-deoxy-D-xylulose 5-phosphate + NADPH + H(+). It functions in the pathway isoprenoid biosynthesis; isopentenyl diphosphate biosynthesis via DXP pathway; isopentenyl diphosphate from 1-deoxy-D-xylulose 5-phosphate: step 1/6. Functionally, catalyzes the NADPH-dependent rearrangement and reduction of 1-deoxy-D-xylulose-5-phosphate (DXP) to 2-C-methyl-D-erythritol 4-phosphate (MEP). The protein is 1-deoxy-D-xylulose 5-phosphate reductoisomerase of Aeromonas hydrophila subsp. hydrophila (strain ATCC 7966 / DSM 30187 / BCRC 13018 / CCUG 14551 / JCM 1027 / KCTC 2358 / NCIMB 9240 / NCTC 8049).